The primary structure comprises 473 residues: Ammonium transporter Rh type C (473 aa).

Topologically, residues 1–9 (MLRNSNMRW) are cytoplasmic. Residues 10 to 30 (RLPLICFVWEIAMIVLFGIFV) form a helical membrane-spanning segment. The Extracellular segment spans residues 31-61 (RYNDEADPHWPIFMKHENITSDIENDFYFRY). A glycan (N-linked (GlcNAc...) asparagine) is linked at Asn-48. A helical transmembrane segment spans residues 62 to 82 (PSFQDVHVMIFVGFGFLMTFL). The Cytoplasmic portion of the chain corresponds to 83 to 86 (QRYG). A helical membrane pass occupies residues 87–107 (FGSVAFNFLLAAFGIQWALLM). At 108–125 (QGWFHTFVNGKILIGVES) the chain is on the extracellular side. The chain crosses the membrane as a helical span at residues 126-145 (LINADFCVGSVCIAFGGVLG). Over 146 to 151 (KVSPVQ) the chain is Cytoplasmic. The helical transmembrane segment at 152–171 (IMLMTLFQVTLFAVNEWILL) threads the bilayer. Topologically, residues 172–179 (NKLHVIDA) are extracellular. Residues 180 to 200 (GGSMTIHTFGAYFGLTVAWIL) traverse the membrane as a helical segment. Residues 201 to 219 (SRPKLKQNNDKEGSTYISD) are Cytoplasmic-facing. A helical transmembrane segment spans residues 220–240 (LFSMIGTLFLWMYWPSFNSAI). Over 241–251 (SYHGDAQHRAA) the chain is Extracellular. Residues 252–272 (INTYCSLAACVLTTVAISSVV) form a helical membrane-spanning segment. At 273–285 (NKKGKLEMVHIQN) the chain is on the cytoplasmic side. A helical membrane pass occupies residues 286-306 (ATLAGGVAVGTAAEMMLTPYG). Residue Ser-307 is a topological domain, extracellular. Residues 308-328 (LIVGFICGIVSTLGFTYLSPI) traverse the membrane as a helical segment. Topologically, residues 329-343 (LSNKLRLHDTCGIHN) are cytoplasmic. A helical membrane pass occupies residues 344-364 (LHAIPGLIGGIVGAVTAACAT). Residues 365–396 (EGVYTAEGLKKMFHFEGEYADRTPSIQGIYQA) are Extracellular-facing. Residues 397–417 (AGIGVSLAFGIVGGTVVGCIL) form a helical membrane-spanning segment. The Cytoplasmic portion of the chain corresponds to 418-473 (KLPIWGDPSDENCFDDDVYWELREEDEEEHLGAANQYITHLPENFKLPDRTEISFK).

It belongs to the ammonium transporter (TC 2.A.49) family. Rh subfamily. As to quaternary structure, homotrimer.

The protein resides in the apical cell membrane. Functionally, functions as an ammonia transporter. The polypeptide is Ammonium transporter Rh type C (rhcg) (Xenopus laevis (African clawed frog)).